Here is a 372-residue protein sequence, read N- to C-terminus: DNA polymerase delta subunit 3 (372 aa).

Disordered regions lie at residues 156–264 (KKAP…NLDS) and 352–372 (KKNT…FGKK). Polar residues predominate over residues 160–173 (STHSPQLSVPSKTS). The residue at position 163 (S163) is a Phosphoserine. 2 stretches are compositionally biased toward basic and acidic residues: residues 174–190 (TIDK…KGKD) and 209–239 (APLE…DDLK). The span at 355-365 (TAQSKPQQKSI) shows a compositional bias: polar residues.

Heterotetramer that consist of the pol3, cdc1, cdc27 and cdm1 subunits. Cdc27 interacts with cdc1 and is required for dimerization of the tetramer.

The protein localises to the nucleus. The protein is DNA polymerase delta subunit 3 (cdc27) of Schizosaccharomyces pombe (strain 972 / ATCC 24843) (Fission yeast).